A 222-amino-acid chain; its full sequence is Abasic site processing protein YedK (222 aa).

Catalysis depends on C2, which acts as the Nucleophile. C2 is modified (thiazolidine linkage to a ring-opened DNA abasic site). Residue E105 is part of the active site.

It belongs to the SOS response-associated peptidase family.

With respect to regulation, formation and reversal of DNA-protein cross-link depends on DNA context. Catalyzes formation of the thiazolidine linkage in presence of abasic sites in single-stranded DNA. Mediates the reversal of the thiazolidine cross-link in presence of double stranded DNA. Its function is as follows. Sensor of abasic sites in single-stranded DNA (ssDNA) required to preserve genome integrity by promoting error-free repair of abasic sites. Recognizes and binds abasic sites in ssDNA at replication forks and chemically modifies the lesion by forming a covalent cross-link with DNA: forms a stable thiazolidine linkage between a ring-opened abasic site and the alpha-amino and sulfhydryl substituents of its N-terminal catalytic cysteine residue. The DNA-protein cross-link is then reversed: able to catalyze the reversal of the thiazolidine cross-link and cycle between a cross-link and a non-cross-linked state depending on DNA context: mediates self-reversal of the thiazolidine cross-link in double stranded DNA. May act as a protease: mediates autocatalytic processing of its N-terminal methionine in order to expose the catalytic cysteine. This Escherichia coli (strain K12) protein is Abasic site processing protein YedK.